The following is a 777-amino-acid chain: Shutoff protein (777 aa).

Disordered regions lie at residues 1-55 (MEED…SVPV) and 261-283 (PLDS…DDDL). The span at 9–20 (QPDSETLTSPTS) shows a compositional bias: polar residues. The tract at residues 250-314 (VMDHLLIKRV…VILVTVELEC (65 aa)) is binding to host EIF4G. In terms of domain architecture, RRM spans 317 to 435 (RFFANPQTLR…ELWTAFSERT (119 aa)). Phosphotyrosine; by host is present on residues Tyr334 and Tyr649. The interval 652–777 (PQTGEELNTP…AAARLVESQP (126 aa)) is disordered. The span at 656–665 (EELNTPSPSA) shows a compositional bias: polar residues. The segment covering 728-738 (GAGGQTPQGRG) has biased composition (gly residues). Residues 753–763 (TRSEPASDGES) are compositionally biased toward basic and acidic residues.

Belongs to the adenoviridae shutoff protein family. Monomer. Interacts with hexon protein; this interaction allows chaperoning and trimerization of hexon proteins. Interacts (via N-terminus) with host initiation factor EIF4G (via C-terminus). Interacts (via RRM domain) with viral mRNAs that contain the tripartite leader; this interaction allows ribosome shunting and expression of viral late mRNAs. Post-translationally, might be cleaved by the viral protease. In terms of processing, phosphorylated. Tyrosine phosphorylation enhances preferential binding to tripartite leader mRNAs and allows ribosome shunting. Methylated. Asymmetric dimethylation by host PRMT1 of the Arg/Gly-rich region may regulate shutoff protein binding to hexon and promote the capsid assembly in the nucleus.

Its subcellular location is the host cytoplasm. Its function is as follows. Protein that inhibits host translation while promoting late viral translation by ribosome shunting. Blocks host cap-dependent translation by binding to eIF4G, displacing MKNK1 from cap initiation complexes and preventing EIF4E phosphorylation. Binds to the tripartite leader sequence of viral late mRNAs and recruits host eIF4G, PABPC1/poly-A binding protein and 40S ribosomes subunits on viral mRNAs, allowing ribosome shunting and efficient translation of late viral mRNAs even though conventional translation via ribosome scanning from the cap has been shut off in the host cell. During assembly, acts as a chaperone protein that helps hexon proteins assembly into trimers. In Homo sapiens (Human), this protein is Shutoff protein.